We begin with the raw amino-acid sequence, 60 residues long: Small, acid-soluble spore protein H (60 aa).

This sequence belongs to the SspH family.

The protein resides in the spore core. The chain is Small, acid-soluble spore protein H from Bacillus velezensis (strain DSM 23117 / BGSC 10A6 / LMG 26770 / FZB42) (Bacillus amyloliquefaciens subsp. plantarum).